We begin with the raw amino-acid sequence, 419 residues long: CCA-adding enzyme (419 aa).

S54 and R57 together coordinate ATP. S54 and R57 together coordinate CTP. Residues D66, D68, and D118 each coordinate Mg(2+). ATP-binding residues include H141, K161, and Y170. Residues H141, K161, and Y170 each coordinate CTP.

This sequence belongs to the tRNA nucleotidyltransferase/poly(A) polymerase family. Archaeal CCA-adding enzyme subfamily. Homodimer. The cofactor is Mg(2+).

It carries out the reaction a tRNA precursor + 2 CTP + ATP = a tRNA with a 3' CCA end + 3 diphosphate. The enzyme catalyses a tRNA with a 3' CCA end + 2 CTP + ATP = a tRNA with a 3' CCACCA end + 3 diphosphate. In terms of biological role, catalyzes the addition and repair of the essential 3'-terminal CCA sequence in tRNAs without using a nucleic acid template. Adds these three nucleotides in the order of C, C, and A to the tRNA nucleotide-73, using CTP and ATP as substrates and producing inorganic pyrophosphate. tRNA 3'-terminal CCA addition is required both for tRNA processing and repair. Also involved in tRNA surveillance by mediating tandem CCA addition to generate a CCACCA at the 3' terminus of unstable tRNAs. While stable tRNAs receive only 3'-terminal CCA, unstable tRNAs are marked with CCACCA and rapidly degraded. In Pyrobaculum aerophilum (strain ATCC 51768 / DSM 7523 / JCM 9630 / CIP 104966 / NBRC 100827 / IM2), this protein is CCA-adding enzyme.